Consider the following 426-residue polypeptide: Tyrosine--tRNA ligase (426 aa).

L-tyrosine is bound at residue Tyr-35. Positions 40–49 (PTAPSLHIGH) match the 'HIGH' region motif. 2 residues coordinate L-tyrosine: Tyr-174 and Gln-178. Residues 234–238 (KFGKT) carry the 'KMSKS' region motif. ATP is bound at residue Lys-237. The S4 RNA-binding domain maps to 358 to 418 (PRVVDALVAT…WAVIRRGRRA (61 aa)).

It belongs to the class-I aminoacyl-tRNA synthetase family. TyrS type 1 subfamily. Homodimer.

The protein localises to the cytoplasm. It catalyses the reaction tRNA(Tyr) + L-tyrosine + ATP = L-tyrosyl-tRNA(Tyr) + AMP + diphosphate + H(+). Its function is as follows. Catalyzes the attachment of tyrosine to tRNA(Tyr) in a two-step reaction: tyrosine is first activated by ATP to form Tyr-AMP and then transferred to the acceptor end of tRNA(Tyr). This is Tyrosine--tRNA ligase from Acidothermus cellulolyticus (strain ATCC 43068 / DSM 8971 / 11B).